The sequence spans 435 residues: Transcriptional enhancer factor TEF-5 (435 aa).

Polar residues predominate over residues 1–12 (MASNSWNASSSP). The interval 1–34 (MASNSWNASSSPGEAREDGPEGLDKGLDNDAEGV) is disordered. At Ala2 the chain carries N-acetylalanine. Over residues 14–28 (EAREDGPEGLDKGLD) the composition is skewed to basic and acidic residues. The segment at residues 28–104 (DNDAEGVWSP…QVLARKKVRE (77 aa)) is a DNA-binding region (TEA). The residue at position 148 (Ser148) is a Phosphoserine. Residues 173 to 435 (GPSQDIKPFA…QHHVYKLVKD (263 aa)) form a transcriptional activation region.

Interacts with YAP1 and WWTR1/TAZ. As to expression, preferentially expressed in the placenta.

It is found in the nucleus. Functionally, transcription factor which plays a key role in the Hippo signaling pathway, a pathway involved in organ size control and tumor suppression by restricting proliferation and promoting apoptosis. The core of this pathway is composed of a kinase cascade wherein MST1/MST2, in complex with its regulatory protein SAV1, phosphorylates and activates LATS1/2 in complex with its regulatory protein MOB1, which in turn phosphorylates and inactivates YAP1 oncoprotein and WWTR1/TAZ. Acts by mediating gene expression of YAP1 and WWTR1/TAZ, thereby regulating cell proliferation, migration and epithelial mesenchymal transition (EMT) induction. Binds to multiple functional elements of the human chorionic somatomammotropin-B gene enhancer. This Homo sapiens (Human) protein is Transcriptional enhancer factor TEF-5 (TEAD3).